The chain runs to 976 residues: Mast/stem cell growth factor receptor kita (976 aa).

An N-terminal signal peptide occupies residues 1 to 21 (MEYHCVLFTVLLQLIIQPGRS). Over 22–515 (RPTITPEGPR…NTVPHELFTP (494 aa)) the chain is Extracellular. 5 Ig-like C2-type domains span residues 23–105 (PTIT…VYVK), 100–199 (IYVY…LTVR), 206–301 (PPIT…VWVN), 308–402 (INIT…FEVH), and 399–504 (FEVH…FSIS). N-linked (GlcNAc...) asparagine glycosylation is found at Asn39 and Asn47. Cystine bridges form between Cys44–Cys89, Cys131–Cys180, Cys146–Cys177, and Cys228–Cys285. N-linked (GlcNAc...) asparagine glycans are attached at residues Asn282, Asn309, Asn315, Asn352, Asn449, and Asn477. Cys422 and Cys488 are joined by a disulfide. A helical membrane pass occupies residues 516 to 536 (LLIGFVAAAVILVLILIVLTY). The Cytoplasmic portion of the chain corresponds to 537 to 976 (KYMQKPKYQI…DRSSPSHPVV (440 aa)). A Mg(2+)-binding site is contributed by Tyr559. A phosphotyrosine; by autocatalysis mark is found at Tyr559 and Tyr561. Residues 580–922 (LRFGKTLGSG…ISDSTKHIYL (343 aa)) form the Protein kinase domain. Residues 587 to 594 (GSGAFGKV), Lys614, and 662 to 668 (EYCCFGD) contribute to the ATP site. Phosphotyrosine; by autocatalysis is present on residues Tyr691 and Tyr707. Asp777 serves as the catalytic Proton acceptor. Arg781 is a binding site for ATP. Residues Asn782 and Asp795 each coordinate Mg(2+). 2 positions are modified to phosphotyrosine; by autocatalysis: Tyr808 and Tyr921. The disordered stretch occupies residues 929–976 (PAAPGPREESSSHVHRLNSVGSHSTATQPLLSSNDVFLDRSSPSHPVV). A compositionally biased stretch (polar residues) spans 947-976 (SVGSHSTATQPLLSSNDVFLDRSSPSHPVV).

Belongs to the protein kinase superfamily. Tyr protein kinase family. CSF-1/PDGF receptor subfamily. Ubiquitinated. Rapidly ubiquitinated after autophosphorylation induced by kitlg/scf binding, leading to internalization and degradation. In terms of processing, autophosphorylated on tyrosine residues. Phosphorylated tyrosine residues are important for interaction with specific binding partners. Expressed in cells of the neural crest-melanocyte lineage. In the embryo, also expressed in mesodermal cells that give rise to hematopoietic precursors, notochord, neural crest-derived cells of the branchial arches, pineal gland, retina and mechanoreceptive sensory cells of lateral line neuromasts. Not detected in primordial germ cells or larval gut.

Its subcellular location is the cell membrane. The enzyme catalyses L-tyrosyl-[protein] + ATP = O-phospho-L-tyrosyl-[protein] + ADP + H(+). Functionally, tyrosine-protein kinase that acts as a cell-surface receptor for the cytokine kitlg/scf and plays a role in the regulation of cell survival and proliferation, hematopoiesis, stem cell maintenance, gametogenesis, and in mast cell development, migration and function. Required for the migration of cells in the melanocyte lineage and the survival of embryonic melanocytes. Required for the differentiation of some, but not all, melanocytes. Not essential for hematopoiesis or primordial germ cell development. In Danio rerio (Zebrafish), this protein is Mast/stem cell growth factor receptor kita (kita).